The following is a 97-amino-acid chain: uncharacterized protein (97 aa).

Helical transmembrane passes span isoleucine 5–isoleucine 25, isoleucine 49–glycine 71, and leucine 75–asparagine 92.

The protein resides in the cell membrane. This is an uncharacterized protein from Bacillus subtilis (strain 168).